The primary structure comprises 288 residues: Phosphatidylserine decarboxylase proenzyme (288 aa).

Catalysis depends on charge relay system; for autoendoproteolytic cleavage activity residues D101, H158, and S262. The active-site Schiff-base intermediate with substrate; via pyruvic acid; for decarboxylase activity is S262. S262 is subject to Pyruvic acid (Ser); by autocatalysis.

It belongs to the phosphatidylserine decarboxylase family. PSD-B subfamily. Prokaryotic type I sub-subfamily. Heterodimer of a large membrane-associated beta subunit and a small pyruvoyl-containing alpha subunit. It depends on pyruvate as a cofactor. Post-translationally, is synthesized initially as an inactive proenzyme. Formation of the active enzyme involves a self-maturation process in which the active site pyruvoyl group is generated from an internal serine residue via an autocatalytic post-translational modification. Two non-identical subunits are generated from the proenzyme in this reaction, and the pyruvate is formed at the N-terminus of the alpha chain, which is derived from the carboxyl end of the proenzyme. The autoendoproteolytic cleavage occurs by a canonical serine protease mechanism, in which the side chain hydroxyl group of the serine supplies its oxygen atom to form the C-terminus of the beta chain, while the remainder of the serine residue undergoes an oxidative deamination to produce ammonia and the pyruvoyl prosthetic group on the alpha chain. During this reaction, the Ser that is part of the protease active site of the proenzyme becomes the pyruvoyl prosthetic group, which constitutes an essential element of the active site of the mature decarboxylase.

It localises to the cell membrane. It catalyses the reaction a 1,2-diacyl-sn-glycero-3-phospho-L-serine + H(+) = a 1,2-diacyl-sn-glycero-3-phosphoethanolamine + CO2. It functions in the pathway phospholipid metabolism; phosphatidylethanolamine biosynthesis; phosphatidylethanolamine from CDP-diacylglycerol: step 2/2. Its function is as follows. Catalyzes the formation of phosphatidylethanolamine (PtdEtn) from phosphatidylserine (PtdSer). The protein is Phosphatidylserine decarboxylase proenzyme of Alkalilimnicola ehrlichii (strain ATCC BAA-1101 / DSM 17681 / MLHE-1).